Reading from the N-terminus, the 173-residue chain is MAEKRNIFLVGPMGAGKSTIGRQLAQQLNMEFFDSDQEIERRTGADVGWVFDVEGEEGFRDREEKVINELTEKQGIVLATGGGSVKSRETRNRLSARGVVVYLETTIEKQLARTQRDKKRPLLQVDEPPREVLEALAKERNPLYEEIADVTIRTDDQSAKVVANQIINMLESN.

An ATP-binding site is contributed by 14 to 19 (GAGKST). Position 18 (Ser18) interacts with Mg(2+). The substrate site is built by Asp36, Arg60, and Gly82. Position 120 (Arg120) interacts with ATP. A substrate-binding site is contributed by Arg140. Gln157 provides a ligand contact to ATP.

Belongs to the shikimate kinase family. Monomer. The cofactor is Mg(2+).

The protein resides in the cytoplasm. It carries out the reaction shikimate + ATP = 3-phosphoshikimate + ADP + H(+). It functions in the pathway metabolic intermediate biosynthesis; chorismate biosynthesis; chorismate from D-erythrose 4-phosphate and phosphoenolpyruvate: step 5/7. In terms of biological role, catalyzes the specific phosphorylation of the 3-hydroxyl group of shikimic acid using ATP as a cosubstrate. This chain is Shikimate kinase 1, found in Yersinia pseudotuberculosis serotype O:1b (strain IP 31758).